A 527-amino-acid chain; its full sequence is MSLELNTIKVNPTGWGPVGKLEKFTDIPYAPFSKGDKIGKCSDWNSNVRNYQRQNYGSNAFNPFTFKLEDDEDSFTLVDYTRVQNKLKNKGKTYQKQFYQQNKRGGSNAGGRGGRGGMRGGRFGSNNKYWNDRRQRNRESSIEILSSWESKEEFDLSTFKQYTVEQLPEPETIGTYGQVKYYNKVYDRINAKNEKKLQKTENSVPLIPTSDDKVIRSEYMNGNVYATDSILAVLMSAQKSVYSWDIVVQKVGARLFFELRPGTSEHLTVNENLTAHHQDDKDPINTTSSLSQEATQVNLNYWQQVLSQNVEPFKFDNELPEGDEFENCVDVGYAYKKWDLGDDIVVLARTEIDGVVEGLPGQPPKFISIKAINEHDSNRFGIEFRKKLDSQRAAILATEIKNNSTKFAKWSIQSTLAGCEMLNLGFVSRDSIRDNNNHVILGTQFYPVADLNKQNGVDMKNCWGILKHIAQTCMKLANGKYLLHRDPNRNVINLYSVPENAFDQIEEETQEEEEEEQSKGWVEESRE.

Residues 100–136 (QQNKRGGSNAGGRGGRGGMRGGRFGSNNKYWNDRRQR) form a disordered region. Gly residues predominate over residues 107–123 (SNAGGRGGRGGMRGGRF). Positions 264-277 (SEHLTVNENLTAHH) are RNA gate. The segment at 503–527 (DQIEEETQEEEEEEQSKGWVEESRE) is disordered. Over residues 504–516 (QIEEETQEEEEEE) the composition is skewed to acidic residues. The span at 517-527 (QSKGWVEESRE) shows a compositional bias: basic and acidic residues.

This sequence belongs to the eIF-3 subunit D family. As to quaternary structure, component of the eukaryotic translation initiation factor 3 (eIF-3) complex.

The protein resides in the cytoplasm. In terms of biological role, mRNA cap-binding component of the eukaryotic translation initiation factor 3 (eIF-3) complex, which is involved in protein synthesis of a specialized repertoire of mRNAs and, together with other initiation factors, stimulates binding of mRNA and methionyl-tRNAi to the 40S ribosome. The eIF-3 complex specifically targets and initiates translation of a subset of mRNAs involved in cell proliferation. In the eIF-3 complex, eif3d specifically recognizes and binds the 7-methylguanosine cap of a subset of mRNAs. This Dictyostelium discoideum (Social amoeba) protein is Eukaryotic translation initiation factor 3 subunit D (eif3d).